The chain runs to 348 residues: MTEASRIVAPERHADDVGDTALRPQKLSEFIGQRQARANLQIFIDAARKREEALDHVLFVGPPGLGKTTLAQIVARELGVGFRATSGPVIAKAGDLAALLTNLEERDVLFIDEIHRLSPAVEEVLYPAMEDFQLDLIIGEGPAARSVKIELAKFTLVGATTRAGLLTNPLRDRFGIPVRLNFYTEDELEKIVSRGARVLNVGMTPDGANEIARRARGTPRIAGRLLRRVRDFAEAADAAAIDRAVADHALGALEVDAAGLDAMDRRYLTTIALSYGGGPVGVETMAAALSEPRDAIEDIIEPYLIQCGYLQRTPRGRLLTSHAFRHLGLTEPSRDPAQSGLFGQDEDR.

Positions 1–183 (MTEASRIVAP…FGIPVRLNFY (183 aa)) are large ATPase domain (RuvB-L). ATP-binding positions include L22, R23, G64, K67, T68, T69, 130 to 132 (EDF), R173, Y183, and R220. T68 is a Mg(2+) binding site. Residues 184–254 (TEDELEKIVS…VADHALGALE (71 aa)) form a small ATPAse domain (RuvB-S) region. The interval 257 to 348 (AAGLDAMDRR…SGLFGQDEDR (92 aa)) is head domain (RuvB-H). The DNA site is built by R293, R312, and R317. Positions 329–348 (LTEPSRDPAQSGLFGQDEDR) are disordered.

This sequence belongs to the RuvB family. In terms of assembly, homohexamer. Forms an RuvA(8)-RuvB(12)-Holliday junction (HJ) complex. HJ DNA is sandwiched between 2 RuvA tetramers; dsDNA enters through RuvA and exits via RuvB. An RuvB hexamer assembles on each DNA strand where it exits the tetramer. Each RuvB hexamer is contacted by two RuvA subunits (via domain III) on 2 adjacent RuvB subunits; this complex drives branch migration. In the full resolvosome a probable DNA-RuvA(4)-RuvB(12)-RuvC(2) complex forms which resolves the HJ.

Its subcellular location is the cytoplasm. It carries out the reaction ATP + H2O = ADP + phosphate + H(+). The RuvA-RuvB-RuvC complex processes Holliday junction (HJ) DNA during genetic recombination and DNA repair, while the RuvA-RuvB complex plays an important role in the rescue of blocked DNA replication forks via replication fork reversal (RFR). RuvA specifically binds to HJ cruciform DNA, conferring on it an open structure. The RuvB hexamer acts as an ATP-dependent pump, pulling dsDNA into and through the RuvAB complex. RuvB forms 2 homohexamers on either side of HJ DNA bound by 1 or 2 RuvA tetramers; 4 subunits per hexamer contact DNA at a time. Coordinated motions by a converter formed by DNA-disengaged RuvB subunits stimulates ATP hydrolysis and nucleotide exchange. Immobilization of the converter enables RuvB to convert the ATP-contained energy into a lever motion, pulling 2 nucleotides of DNA out of the RuvA tetramer per ATP hydrolyzed, thus driving DNA branch migration. The RuvB motors rotate together with the DNA substrate, which together with the progressing nucleotide cycle form the mechanistic basis for DNA recombination by continuous HJ branch migration. Branch migration allows RuvC to scan DNA until it finds its consensus sequence, where it cleaves and resolves cruciform DNA. The chain is Holliday junction branch migration complex subunit RuvB from Nitrobacter winogradskyi (strain ATCC 25391 / DSM 10237 / CIP 104748 / NCIMB 11846 / Nb-255).